The sequence spans 92 residues: Late cornified envelope protein 3E (92 aa).

Residues 1–10 (MSCQQNQKQC) are compositionally biased toward low complexity. Disordered regions lie at residues 1-22 (MSCQ…PKCP) and 64-92 (RRQR…GGCC). Residues 11 to 22 (QPPPKCPSPKCP) show a composition bias toward pro residues. A compositionally biased stretch (gly residues) spans 76–92 (GQQGGGSGCCHGSGGCC).

Belongs to the LCE family. As to quaternary structure, interacts with CYSRT1. As to expression, skin-specific. Expression was readily detected in adult trunk skin, adult arm skin, fetal skin, penal skin, vulva, esophagus and tongue. Not expressed in the cervix, rectum, lung, colon, or placenta.

Precursors of the cornified envelope of the stratum corneum. This Homo sapiens (Human) protein is Late cornified envelope protein 3E (LCE3E).